Reading from the N-terminus, the 284-residue chain is Putative ABC transporter ATP-binding protein MG468.1 homolog (284 aa).

Residues 53-284 (VLFKGVCKAV…PKTINEINWV (232 aa)) enclose the ABC transporter domain. 89–96 (GKSGSGKT) contacts ATP.

This sequence belongs to the ABC transporter superfamily.

The protein is Putative ABC transporter ATP-binding protein MG468.1 homolog of Mycoplasma pneumoniae (strain ATCC 29342 / M129 / Subtype 1) (Mycoplasmoides pneumoniae).